We begin with the raw amino-acid sequence, 261 residues long: Cytochrome c oxidase subunit 3 (261 aa).

Residues 1-15 (MTHQTHAYHMVNPSP) lie on the Mitochondrial matrix side of the membrane. Residues 16 to 34 (WPLTGALSALLMTSGLAMW) form a helical membrane-spanning segment. Topologically, residues 35–40 (FHYNSM) are mitochondrial intermembrane. The helical transmembrane segment at 41 to 66 (LLLTLGLMTNLLTMYQWWRDIVREST) threads the bilayer. Residues 67 to 72 (FQGHHT) are Mitochondrial matrix-facing. A helical membrane pass occupies residues 73 to 105 (LVVQKGLRYGMILFIISEVFFFSGFFWAFYHSS). The Mitochondrial intermembrane portion of the chain corresponds to 106 to 128 (LAPTPELGGCWPPTGIHPLNPME). Residues 129–152 (VPLLNTSVLLASGVSITWAHHSLM) form a helical membrane-spanning segment. Over 153 to 155 (EGN) the chain is Mitochondrial matrix. A helical transmembrane segment spans residues 156-183 (RKHMLQALFITISLGVYFTLLQASEYYE). Topologically, residues 184–190 (APFTISD) are mitochondrial intermembrane. A helical transmembrane segment spans residues 191-223 (GIYGSTFFVATGFHGLHVIIGSTFLIVCFLRQL). Residues 224-232 (KFHFTSNHH) are Mitochondrial matrix-facing. A helical transmembrane segment spans residues 233-256 (FGFEAAAWYWHFVDVVWLFLYVSI). Residues 257–261 (YWWGS) are Mitochondrial intermembrane-facing.

This sequence belongs to the cytochrome c oxidase subunit 3 family. Component of the cytochrome c oxidase (complex IV, CIV), a multisubunit enzyme composed of 14 subunits. The complex is composed of a catalytic core of 3 subunits MT-CO1, MT-CO2 and MT-CO3, encoded in the mitochondrial DNA, and 11 supernumerary subunits COX4I, COX5A, COX5B, COX6A, COX6B, COX6C, COX7A, COX7B, COX7C, COX8 and NDUFA4, which are encoded in the nuclear genome. The complex exists as a monomer or a dimer and forms supercomplexes (SCs) in the inner mitochondrial membrane with NADH-ubiquinone oxidoreductase (complex I, CI) and ubiquinol-cytochrome c oxidoreductase (cytochrome b-c1 complex, complex III, CIII), resulting in different assemblies (supercomplex SCI(1)III(2)IV(1) and megacomplex MCI(2)III(2)IV(2)).

The protein resides in the mitochondrion inner membrane. The enzyme catalyses 4 Fe(II)-[cytochrome c] + O2 + 8 H(+)(in) = 4 Fe(III)-[cytochrome c] + 2 H2O + 4 H(+)(out). In terms of biological role, component of the cytochrome c oxidase, the last enzyme in the mitochondrial electron transport chain which drives oxidative phosphorylation. The respiratory chain contains 3 multisubunit complexes succinate dehydrogenase (complex II, CII), ubiquinol-cytochrome c oxidoreductase (cytochrome b-c1 complex, complex III, CIII) and cytochrome c oxidase (complex IV, CIV), that cooperate to transfer electrons derived from NADH and succinate to molecular oxygen, creating an electrochemical gradient over the inner membrane that drives transmembrane transport and the ATP synthase. Cytochrome c oxidase is the component of the respiratory chain that catalyzes the reduction of oxygen to water. Electrons originating from reduced cytochrome c in the intermembrane space (IMS) are transferred via the dinuclear copper A center (CU(A)) of subunit 2 and heme A of subunit 1 to the active site in subunit 1, a binuclear center (BNC) formed by heme A3 and copper B (CU(B)). The BNC reduces molecular oxygen to 2 water molecules using 4 electrons from cytochrome c in the IMS and 4 protons from the mitochondrial matrix. This is Cytochrome c oxidase subunit 3 (MT-CO3) from Ceratotherium simum (White rhinoceros).